The primary structure comprises 144 residues: Snaclec coagulation factor IX/factor X-binding protein subunit B1 (144 aa).

The first 23 residues, 1–23, serve as a signal peptide directing secretion; the sequence is MGRFIFVSFGLLVVFLSLSGTAA. 3 cysteine pairs are disulfide-bonded: cysteine 25-cysteine 36, cysteine 53-cysteine 142, and cysteine 119-cysteine 134. The C-type lectin domain occupies 32 to 143; sequence YEGHCYKPFN…CRMMANFVCE (112 aa).

It belongs to the snaclec family. As to quaternary structure, heterodimer of subunits A and B1; disulfide-linked. As to expression, expressed by the venom gland.

The protein resides in the secreted. Functionally, anticoagulant protein which binds to the gamma-carboxyglutamic acid-domain regions of factors IX (F9) and factor X (F10) in the presence of calcium with a 1 to 1 stoichiometry. This Trimeresurus stejnegeri (Chinese green tree viper) protein is Snaclec coagulation factor IX/factor X-binding protein subunit B1.